Reading from the N-terminus, the 562-residue chain is SPI-1 type 3 secretion system secretin (562 aa).

The N-terminal stretch at 1–24 (MKTHILLARVLACAALVLVTPGYS) is a signal peptide.

The protein belongs to the bacterial secretin family. T3SS SctC subfamily. As to quaternary structure, the core secretion machinery of the T3SS is composed of approximately 20 different proteins, including cytoplasmic components, a base, an export apparatus and a needle. This subunit is part of the base, which anchors the injectisome in the bacterial cell envelope. Forms a stable homooligomeric complex. The complex is composed of 15 subunits.

Its subcellular location is the cell outer membrane. Component of the type III secretion system (T3SS), also called injectisome, which is used to inject bacterial effector proteins into eukaryotic host cells. Forms a ring-shaped multimeric structure with an apparent central pore in the outer membrane. This Salmonella typhimurium (strain LT2 / SGSC1412 / ATCC 700720) protein is SPI-1 type 3 secretion system secretin.